A 378-amino-acid chain; its full sequence is Chaperone protein DnaJ 1 (378 aa).

A J domain is found at 4–68; the sequence is DYYGILGVDR…DKRRIVDMGG (65 aa). The CR-type zinc-finger motif lies at 129 to 211; the sequence is GVKKDLTLDT…CAGDGRVRAR (83 aa). Residues Cys-142, Cys-145, Cys-159, Cys-162, Cys-185, Cys-188, Cys-199, and Cys-202 each coordinate Zn(2+). CXXCXGXG motif repeat units lie at residues 142–149, 159–166, 185–192, and 199–206; these read CSKCHGSG, CGTCHGSG, CHTCNGTG, and CDECAGDG.

It belongs to the DnaJ family. Homodimer. The cofactor is Zn(2+).

Its subcellular location is the cytoplasm. Its function is as follows. Participates actively in the response to hyperosmotic and heat shock by preventing the aggregation of stress-denatured proteins and by disaggregating proteins, also in an autonomous, DnaK-independent fashion. Unfolded proteins bind initially to DnaJ; upon interaction with the DnaJ-bound protein, DnaK hydrolyzes its bound ATP, resulting in the formation of a stable complex. GrpE releases ADP from DnaK; ATP binding to DnaK triggers the release of the substrate protein, thus completing the reaction cycle. Several rounds of ATP-dependent interactions between DnaJ, DnaK and GrpE are required for fully efficient folding. Also involved, together with DnaK and GrpE, in the DNA replication of plasmids through activation of initiation proteins. This Corynebacterium efficiens (strain DSM 44549 / YS-314 / AJ 12310 / JCM 11189 / NBRC 100395) protein is Chaperone protein DnaJ 1.